Here is a 244-residue protein sequence, read N- to C-terminus: NAD(P)H-quinone oxidoreductase subunit K (244 aa).

Residues Cys-60, Cys-61, Cys-125, and Cys-156 each coordinate [4Fe-4S] cluster. The interval 213–244 (TSANSIPSSKKEKITELPDNNEKAEIIDTLEN) is disordered. Residues 221 to 238 (SKKEKITELPDNNEKAEI) show a composition bias toward basic and acidic residues.

Belongs to the complex I 20 kDa subunit family. In terms of assembly, NDH-1 can be composed of about 15 different subunits; different subcomplexes with different compositions have been identified which probably have different functions. The cofactor is [4Fe-4S] cluster.

The protein localises to the cellular thylakoid membrane. The catalysed reaction is a plastoquinone + NADH + (n+1) H(+)(in) = a plastoquinol + NAD(+) + n H(+)(out). It carries out the reaction a plastoquinone + NADPH + (n+1) H(+)(in) = a plastoquinol + NADP(+) + n H(+)(out). NDH-1 shuttles electrons from an unknown electron donor, via FMN and iron-sulfur (Fe-S) centers, to quinones in the respiratory and/or the photosynthetic chain. The immediate electron acceptor for the enzyme in this species is believed to be plastoquinone. Couples the redox reaction to proton translocation, and thus conserves the redox energy in a proton gradient. Cyanobacterial NDH-1 also plays a role in inorganic carbon-concentration. The chain is NAD(P)H-quinone oxidoreductase subunit K from Prochlorococcus marinus (strain MIT 9301).